We begin with the raw amino-acid sequence, 612 residues long: Elongation factor 4 (612 aa).

Positions 12–194 constitute a tr-type G domain; that stretch reads SRIRNFSIIA…QIVEKVPAPS (183 aa). GTP-binding positions include 24-29 and 141-144; these read DHGKST and NKID.

It belongs to the TRAFAC class translation factor GTPase superfamily. Classic translation factor GTPase family. LepA subfamily.

It is found in the cell membrane. The catalysed reaction is GTP + H2O = GDP + phosphate + H(+). Its function is as follows. Required for accurate and efficient protein synthesis under certain stress conditions. May act as a fidelity factor of the translation reaction, by catalyzing a one-codon backward translocation of tRNAs on improperly translocated ribosomes. Back-translocation proceeds from a post-translocation (POST) complex to a pre-translocation (PRE) complex, thus giving elongation factor G a second chance to translocate the tRNAs correctly. Binds to ribosomes in a GTP-dependent manner. The protein is Elongation factor 4 of Bacillus licheniformis (strain ATCC 14580 / DSM 13 / JCM 2505 / CCUG 7422 / NBRC 12200 / NCIMB 9375 / NCTC 10341 / NRRL NRS-1264 / Gibson 46).